The sequence spans 520 residues: Bifunctional dihydrofolate reductase-thymidylate synthase (520 aa).

The 204-residue stretch at 26-229 (AFSIVVALDM…LEFEICKYVP (204 aa)) folds into the DHFR domain. Val-30 is a substrate binding site. NADP(+) contacts are provided by residues Ala-32 and 38 to 44 (GIGDGES). Residue Asp-52 coordinates substrate. NADP(+) is bound by residues 81–83 (RKT), 102–105 (LSSK), and 157–164 (GGAQVYAD). Positions 162 and 180 each coordinate substrate. The segment at 234-520 (ERQYLELIDR…HPAIKMEMAV (287 aa)) is thymidylate synthase. Residue Arg-254 coordinates dUMP. Residue Cys-400 is part of the active site. Residues His-401, 421 to 425 (QRSCD), Asn-433, and 463 to 465 (HVY) contribute to the dUMP site.

It in the N-terminal section; belongs to the dihydrofolate reductase family. The protein in the C-terminal section; belongs to the thymidylate synthase family.

It carries out the reaction (6S)-5,6,7,8-tetrahydrofolate + NADP(+) = 7,8-dihydrofolate + NADPH + H(+). The catalysed reaction is dUMP + (6R)-5,10-methylene-5,6,7,8-tetrahydrofolate = 7,8-dihydrofolate + dTMP. It participates in cofactor biosynthesis; tetrahydrofolate biosynthesis; 5,6,7,8-tetrahydrofolate from 7,8-dihydrofolate: step 1/1. Its function is as follows. Bifunctional enzyme. Involved in de novo dTMP biosynthesis. Key enzyme in folate metabolism. Catalyzes an essential reaction for de novo glycine and purine synthesis, DNA precursor synthesis, and for the conversion of dUMP to dTMP. This Leishmania major protein is Bifunctional dihydrofolate reductase-thymidylate synthase.